A 182-amino-acid chain; its full sequence is Lipoprotein signal peptidase (182 aa).

3 helical membrane-spanning segments follow: residues 21 to 41 (LLLS…VLAV), 74 to 94 (GYTW…FWMG), and 98 to 118 (VSPW…GNLV). Residues D134 and D148 contribute to the active site. Residues 146–166 (VADPSVVGGAILLVVLSIFGY) form a helical membrane-spanning segment.

It belongs to the peptidase A8 family.

It localises to the cell membrane. It catalyses the reaction Release of signal peptides from bacterial membrane prolipoproteins. Hydrolyzes -Xaa-Yaa-Zaa-|-(S,diacylglyceryl)Cys-, in which Xaa is hydrophobic (preferably Leu), and Yaa (Ala or Ser) and Zaa (Gly or Ala) have small, neutral side chains.. It functions in the pathway protein modification; lipoprotein biosynthesis (signal peptide cleavage). Its function is as follows. This protein specifically catalyzes the removal of signal peptides from prolipoproteins. The protein is Lipoprotein signal peptidase of Mycobacterium avium (strain 104).